The chain runs to 364 residues: Histidinol-phosphate aminotransferase (364 aa).

A disordered region spans residues 1 to 46 (MQPRDLSDHSPYVPGRGVEEVARDRGLDPDDLIKLSSNENPHGPSP). Positions 17–33 (GVEEVARDRGLDPDDLI) are enriched in basic and acidic residues. Position 222 is an N6-(pyridoxal phosphate)lysine (Lys-222).

This sequence belongs to the class-II pyridoxal-phosphate-dependent aminotransferase family. Histidinol-phosphate aminotransferase subfamily. Pyridoxal 5'-phosphate is required as a cofactor.

The catalysed reaction is L-histidinol phosphate + 2-oxoglutarate = 3-(imidazol-4-yl)-2-oxopropyl phosphate + L-glutamate. The protein operates within amino-acid biosynthesis; L-histidine biosynthesis; L-histidine from 5-phospho-alpha-D-ribose 1-diphosphate: step 7/9. The polypeptide is Histidinol-phosphate aminotransferase (Halorubrum lacusprofundi (strain ATCC 49239 / DSM 5036 / JCM 8891 / ACAM 34)).